A 686-amino-acid polypeptide reads, in one-letter code: Soluble guanylate cyclase gcy-34 (686 aa).

A heme-binding site is contributed by His-105. Coiled coils occupy residues 306–335 and 398–432; these read KKHM…ELTQ and VEVN…LKDM. The 129-residue stretch at 455–583 folds into the Guanylate cyclase domain; sequence TVMFCDLPAF…ETVTLASQME (129 aa). 2 residues coordinate Mg(2+): Asp-460 and Asp-504.

The protein belongs to the adenylyl cyclase class-4/guanylyl cyclase family. In terms of assembly, heterodimer; with other soluble guanylate cyclases. Heme is required as a cofactor. Expressed in a small number of neurons, corresponding to URX, AQR and PQR neurons.

It is found in the cytoplasm. It catalyses the reaction GTP = 3',5'-cyclic GMP + diphosphate. May be regulated by molecular oxygen. Probably not activated by nitric oxide (NO). Functionally, synthesizes cyclic GMP (cGMP) from GTP. May be involved in sensitivity to quinine by regulating egl-4 activity through the production of cGMP. This Caenorhabditis elegans protein is Soluble guanylate cyclase gcy-34 (gcy-34).